A 47-amino-acid chain; its full sequence is Cytochrome b559 subunit beta (47 aa).

Residues 22–38 form a helical membrane-spanning segment; that stretch reads WLAVHTLAIPTVFFLGA. Position 26 (His-26) interacts with heme.

Belongs to the PsbE/PsbF family. As to quaternary structure, heterodimer of an alpha subunit and a beta subunit. PSII is composed of 1 copy each of membrane proteins PsbA, PsbB, PsbC, PsbD, PsbE, PsbF, PsbH, PsbI, PsbJ, PsbK, PsbL, PsbM, PsbT, PsbX, PsbY, PsbZ, Psb30/Ycf12, peripheral proteins PsbO, CyanoQ (PsbQ), PsbU, PsbV and a large number of cofactors. It forms dimeric complexes. Heme b is required as a cofactor.

Its subcellular location is the cellular thylakoid membrane. Functionally, this b-type cytochrome is tightly associated with the reaction center of photosystem II (PSII). PSII is a light-driven water:plastoquinone oxidoreductase that uses light energy to abstract electrons from H(2)O, generating O(2) and a proton gradient subsequently used for ATP formation. It consists of a core antenna complex that captures photons, and an electron transfer chain that converts photonic excitation into a charge separation. This is Cytochrome b559 subunit beta from Synechococcus sp. (strain JA-3-3Ab) (Cyanobacteria bacterium Yellowstone A-Prime).